We begin with the raw amino-acid sequence, 155 residues long: Interleukin-2 (155 aa).

The signal sequence occupies residues 1-20; sequence MYKMQLLSCIALTLVLVANS. A glycan (O-linked (GalNAc...) threonine) is linked at Thr-23. Cys-79 and Cys-127 form a disulfide bridge.

It belongs to the IL-2 family.

It localises to the secreted. In terms of biological role, cytokine produced by activated CD4-positive helper T-cells and to a lesser extend activated CD8-positive T-cells and natural killer (NK) cells that plays pivotal roles in the immune response and tolerance. Binds to a receptor complex composed of either the high-affinity trimeric IL-2R (IL2RA/CD25, IL2RB/CD122 and IL2RG/CD132) or the low-affinity dimeric IL-2R (IL2RB and IL2RG). Interaction with the receptor leads to oligomerization and conformation changes in the IL-2R subunits resulting in downstream signaling starting with phosphorylation of JAK1 and JAK3. In turn, JAK1 and JAK3 phosphorylate the receptor to form a docking site leading to the phosphorylation of several substrates including STAT5. This process leads to activation of several pathways including STAT, phosphoinositide-3-kinase/PI3K and mitogen-activated protein kinase/MAPK pathways. Functions as a T-cell growth factor and can increase NK-cell cytolytic activity as well. Promotes strong proliferation of activated B-cells and subsequently immunoglobulin production. Plays a pivotal role in regulating the adaptive immune system by controlling the survival and proliferation of regulatory T-cells, which are required for the maintenance of immune tolerance. Moreover, participates in the differentiation and homeostasis of effector T-cell subsets, including Th1, Th2, Th17 as well as memory CD8-positive T-cells. The polypeptide is Interleukin-2 (IL2) (Halichoerus grypus (Gray seal)).